Reading from the N-terminus, the 170-residue chain is Envelope protein 166 (170 aa).

Residue Met1 is a topological domain, intravirion. A helical membrane pass occupies residues 2–22 (FYPVVQVLIGIILVIILILGF). Over 23 to 170 (YHMKHKPPKK…TVMGIARNVL (148 aa)) the chain is Virion surface.

The protein belongs to the asfivirus envelope protein p22 family.

The protein localises to the virion membrane. The protein resides in the host cell membrane. This chain is Envelope protein 166, found in Ornithodoros (relapsing fever ticks).